The following is a 432-amino-acid chain: Anaerobic glycerol-3-phosphate dehydrogenase subunit B (432 aa).

This sequence belongs to the anaerobic G-3-P dehydrogenase subunit B family. In terms of assembly, composed of a catalytic GlpA/B dimer and of membrane bound GlpC. Requires FMN as cofactor.

The enzyme catalyses a quinone + sn-glycerol 3-phosphate = dihydroxyacetone phosphate + a quinol. It participates in polyol metabolism; glycerol degradation via glycerol kinase pathway; glycerone phosphate from sn-glycerol 3-phosphate (anaerobic route): step 1/1. Functionally, conversion of glycerol 3-phosphate to dihydroxyacetone. Uses fumarate or nitrate as electron acceptor. The sequence is that of Anaerobic glycerol-3-phosphate dehydrogenase subunit B from Haemophilus influenzae (strain 86-028NP).